The sequence spans 699 residues: Ribosomal RNA large subunit methyltransferase K/L (699 aa).

The region spanning 44 to 155 (DAYKLCLWSR…RDNVILGIDL (112 aa)) is the THUMP domain.

It belongs to the methyltransferase superfamily. RlmKL family.

It localises to the cytoplasm. The catalysed reaction is guanosine(2445) in 23S rRNA + S-adenosyl-L-methionine = N(2)-methylguanosine(2445) in 23S rRNA + S-adenosyl-L-homocysteine + H(+). It catalyses the reaction guanosine(2069) in 23S rRNA + S-adenosyl-L-methionine = N(2)-methylguanosine(2069) in 23S rRNA + S-adenosyl-L-homocysteine + H(+). Functionally, specifically methylates the guanine in position 2445 (m2G2445) and the guanine in position 2069 (m7G2069) of 23S rRNA. The sequence is that of Ribosomal RNA large subunit methyltransferase K/L from Alteromonas mediterranea (strain DSM 17117 / CIP 110805 / LMG 28347 / Deep ecotype).